Consider the following 239-residue polypeptide: tRNA1(Val) (adenine(37)-N6)-methyltransferase (239 aa).

This sequence belongs to the methyltransferase superfamily. tRNA (adenine-N(6)-)-methyltransferase family.

The protein resides in the cytoplasm. It catalyses the reaction adenosine(37) in tRNA1(Val) + S-adenosyl-L-methionine = N(6)-methyladenosine(37) in tRNA1(Val) + S-adenosyl-L-homocysteine + H(+). Functionally, specifically methylates the adenine in position 37 of tRNA(1)(Val) (anticodon cmo5UAC). The chain is tRNA1(Val) (adenine(37)-N6)-methyltransferase from Vibrio campbellii (strain ATCC BAA-1116).